We begin with the raw amino-acid sequence, 332 residues long: DNA-directed RNA polymerase subunit alpha (332 aa).

An alpha N-terminal domain (alpha-NTD) region spans residues 1–232 (MKGYLKDFLK…DQLSVFVDLE (232 aa)). Residues 247-332 (IDPVLLRPID…SLGDRARIAG (86 aa)) are alpha C-terminal domain (alpha-CTD).

It belongs to the RNA polymerase alpha chain family. In terms of assembly, homodimer. The RNAP catalytic core consists of 2 alpha, 1 beta, 1 beta' and 1 omega subunit. When a sigma factor is associated with the core the holoenzyme is formed, which can initiate transcription.

The catalysed reaction is RNA(n) + a ribonucleoside 5'-triphosphate = RNA(n+1) + diphosphate. DNA-dependent RNA polymerase catalyzes the transcription of DNA into RNA using the four ribonucleoside triphosphates as substrates. The protein is DNA-directed RNA polymerase subunit alpha of Halorhodospira halophila (strain DSM 244 / SL1) (Ectothiorhodospira halophila (strain DSM 244 / SL1)).